The primary structure comprises 551 residues: Urocanate hydratase (551 aa).

Residues 48 to 49 (GG), Gln-126, 172 to 174 (GMG), Glu-192, Arg-197, 238 to 239 (NA), 259 to 263 (QTSAH), 269 to 270 (YI), and Tyr-318 each bind NAD(+). Cys-406 is an active-site residue. Gly-488 is an NAD(+) binding site.

It belongs to the urocanase family. NAD(+) serves as cofactor.

It localises to the cytoplasm. The enzyme catalyses 4-imidazolone-5-propanoate = trans-urocanate + H2O. Its pathway is amino-acid degradation; L-histidine degradation into L-glutamate; N-formimidoyl-L-glutamate from L-histidine: step 2/3. Its function is as follows. Catalyzes the conversion of urocanate to 4-imidazolone-5-propionate. The chain is Urocanate hydratase from Geobacillus kaustophilus (strain HTA426).